A 789-amino-acid chain; its full sequence is SH3 domain-containing protein 19 (789 aa).

Disordered stretches follow at residues 24–170 (TNTE…PPRL), 209–404 (DDDV…RPKP), and 472–497 (TPLDERPRGRPNDSGHSQKPVDSGAP). Phosphoserine is present on S65. The segment covering 296 to 305 (SHSDRTRNPE) has biased composition (basic and acidic residues). The segment covering 335 to 351 (WRPPPKGAPERPPPPKL) has biased composition (pro residues). Over residues 352–361 (PASKSSNKNL) the composition is skewed to low complexity. S368 carries the phosphoserine modification. 5 consecutive SH3 domains span residues 414 to 476 (LSVP…PLDE), 494 to 553 (SGAP…VIVD), 570 to 629 (AKGP…LVGD), 660 to 719 (PPGE…PCPA), and 729 to 788 (PKGR…FLQV). A compositionally biased stretch (basic and acidic residues) spans 474-484 (LDERPRGRPND). The segment at 635 to 663 (ANILSTKVPPKTKNEDPGSNSQDSSPPGE) is disordered.

In terms of assembly, interacts with ADAM12. Isoform 2 (but not isoform 1) interacts with ADAM9, ADAM10, ADAM15 and ADAM17. Interacts with SH3GL1 SH3 domain. Interacts via SH3 3 and SH3 4 or SH3 4 and SH3 5 domains with SOS2. Probably forms a trimeric complex with SH3GL1 and SOS2. Interacts with SH3YL1. Expressed in hair follicles.

It localises to the cytoplasm. Functionally, may play a role in regulating A disintegrin and metalloproteases (ADAMs) in the signaling of EGFR-ligand shedding. May be involved in suppression of Ras-induced cellular transformation and Ras-mediated activation of ELK1. Plays a role in the regulation of cell morphology and cytoskeletal organization. This chain is SH3 domain-containing protein 19 (Sh3d19), found in Mus musculus (Mouse).